The chain runs to 214 residues: Thymidylate kinase (214 aa).

An ATP-binding site is contributed by 10–17 (GGEGAGKS).

This sequence belongs to the thymidylate kinase family.

The enzyme catalyses dTMP + ATP = dTDP + ADP. Functionally, phosphorylation of dTMP to form dTDP in both de novo and salvage pathways of dTTP synthesis. The polypeptide is Thymidylate kinase (Brucella canis (strain ATCC 23365 / NCTC 10854 / RM-666)).